A 904-amino-acid polypeptide reads, in one-letter code: Disks large homolog 1 (904 aa).

An L27 domain is found at 4–64 (RKQDTQRALH…FYEVTLLDNP (61 aa)). The residue at position 115 (T115) is a Phosphothreonine. Phosphoserine is present on residues S122, S138, and S158. Residues 162–212 (PTEAVLPSPPTVPVIPVLPVPAENTVILPTIPQANPPPVLVNTDSLETPTY) are interaction with SH3 domains. PDZ domains lie at 224 to 310 (EITL…VKRR), 319 to 405 (EIKL…VAKP), and 466 to 546 (KVVL…AQYR). The required for interaction with MARCHF2 stretch occupies residues 224–546 (EITLERGNSG…QAVTIVAQYR (323 aa)). Position 232 is a phosphoserine (S232). Y399 carries the phosphotyrosine modification. Phosphoserine occurs at positions 568, 573, 575, 579, 598, 619, 676, 684, 687, 709, and 834. In terms of domain architecture, SH3 spans 581–651 (KRSLYVRALF…PSKRRVEKKE (71 aa)). The disordered stretch occupies residues 662 to 693 (SKTRDKGEIPDDMGSKGLKHVTSNASDSESSY). A compositionally biased stretch (polar residues) spans 682-693 (VTSNASDSESSY). Positions 714-889 (TRPVIILGPM…IYNQVKQIIE (176 aa)) constitute a Guanylate kinase-like domain.

This sequence belongs to the MAGUK family. In terms of assembly, homotetramer. Interacts (via guanylate kinase-like domain) with DLGAP1, DLGAP2, DLGAP3, DLGAP4 and MAP1A. Interacts (via guanylate kinase-like domain) with KIF13B. May interact with HTR2A. Interacts (via PDZ domains) with GRIA1. Interacts (via PDZ domains) with GRIN2A. Interacts (via PDZ domains) with KCND2 and KCND3. Interacts (via PDZ domains) with KCNA1, KCNA2, KCNA3 and KCNA4. Interacts (via PDZ domains) with ADGRA3. Interacts with KCNF1. Interacts with CAMK2. Interacts with cytoskeleton-associated protein EPB41. Interacts with cytoskeleton-associated protein EZR. Found in a complex with KCNA5 and CAV3. Found in a complex with APC and CTNNB1. Interacts (via PDZ domains) with APC. Interacts with CDH1 through binding to PIK3R1. Forms multiprotein complexes with CASK, LIN7A, LIN7B, LIN7C, APBA1, and KCNJ12. Interacts with TOPK. Forms a tripartite complex composed of DLG1, MPP7 and LIN7 (LIN7A or LIN7C). May interact with TJAP1. Interacts with PTEN. Interacts with FRMPD4 (via C-terminus). Interacts with LRFN1, LRFN2 and LRFN4. Interacts with SFPQ. Interacts (via PDZ domains) with ADGRA2 (via PDZ-binding motif). Interacts with ADAM10; this interaction recruits ADAM10 to the cell membrane during long-term depression in hippocampal neurons. Interacts with DGKI (via PDZ-binding motif). Interacts (via PDZ domains) with MARCHF2 (via PDZ domain); the interaction leads to DLG1 ubiqtuitination and degradation. Interacts (via N-terminus) with MPP3; this interaction connects CADM1 with DLG1 and links CADM1 with the regulatory subunit of phosphoinositide-3-kinase (PI3K) by forming a multiprotein complex and participates in cell spreading. (Microbial infection) Interacts with HTLV-1 protein Tax. As to quaternary structure, (Microbial infection) Interacts (via PDZ domains 1 and 2) with influenza A virus protein NS1; the interaction results in the translocation of DLG1 from the cell membrane to perinuclear puncta. Acts as a scaffold protein to facilitate the interaction between LIN7C and influenza A virus protein NS1; the interaction facilitates translocation of LIN7C to cytoplasmic puncta. In terms of assembly, (Microbial infection) Interacts with human papillomavirus 18/HPV-18 protein E6. In terms of processing, phosphorylated by MAPK12. Phosphorylation of Ser-232 regulates association with GRIN2A. Ubiquitinated; by MARCHF2 which results in its degradation. In terms of tissue distribution, abundantly expressed in atrial myocardium (at protein level). Expressed in lung fibroblasts, cervical epithelial and B-cells (at protein level). Expressed in the brain (at protein level). Widely expressed, with isoforms displaying different expression profiles.

It is found in the cell membrane. The protein resides in the basolateral cell membrane. The protein localises to the endoplasmic reticulum membrane. Its subcellular location is the postsynaptic density. It localises to the synapse. It is found in the sarcolemma. The protein resides in the apical cell membrane. The protein localises to the cell junction. Its subcellular location is the cytoplasm. Its function is as follows. Essential multidomain scaffolding protein required for normal development. Recruits channels, receptors and signaling molecules to discrete plasma membrane domains in polarized cells. Promotes epithelial cell layer barrier function via maintaining cell-cell adhesion. May also play a role in adherens junction assembly, signal transduction, cell proliferation, synaptogenesis and lymphocyte activation. Regulates the excitability of cardiac myocytes by modulating the functional expression of Kv4 channels. Functional regulator of Kv1.5 channel. During long-term depression in hippocampal neurons, it recruits ADAM10 to the plasma membrane. The polypeptide is Disks large homolog 1 (Homo sapiens (Human)).